Here is a 359-residue protein sequence, read N- to C-terminus: Peptide chain release factor 1 (359 aa).

Residue glutamine 236 is modified to N5-methylglutamine.

The protein belongs to the prokaryotic/mitochondrial release factor family. Methylated by PrmC. Methylation increases the termination efficiency of RF1.

The protein localises to the cytoplasm. In terms of biological role, peptide chain release factor 1 directs the termination of translation in response to the peptide chain termination codons UAG and UAA. This is Peptide chain release factor 1 from Streptococcus pyogenes serotype M3 (strain ATCC BAA-595 / MGAS315).